The chain runs to 156 residues: Aspercryptin biosynthesis cluster protein B (156 aa).

Positions 1 to 39 are cleaved as a signal peptide; that stretch reads MRMANRIGAGRKSALQLSHLRTRLTSSAAAVATAPTLDP.

Belongs to the YciI family.

It participates in secondary metabolite biosynthesis. Its function is as follows. Part of the gene cluster that mediates the biosynthesis of aspercryptins, linear lipopeptides built from six amino acids including 2 highly unusual and nonproteogenic amino acids, 2-amino-octanoic acid (2aoa) and 2-amino-dodecanol (2adol). The core structure of aspercryptins is as follows: Ser/Ala-Thr-Ile/Val-2aoa-Aasn-2adol. The first step of aspercryptin biosynthesis is the generation of the fatty acid precursors, octanoic and dodecanoic acids, by the FAS subunits atnF and atnM. The fatty acid precursors are likely transformed into the corresponding alpha-amino fatty acids in three steps. First, they are hydroxylated by the cytochrome P450 monooxygenase atnE, then oxidized to the corresponding alpha-keto acids by the NAD(P)-dependent oxidoreductase atnD, and finally converted to the alpha-amino fatty acids by the PLP-dependent aminotransferases atnH or atnJ. the alpha-amino fatty acids, 2-amino-octanoic and 2-amino-dodecanoic acids, are recognized, activated, and covalently tethered to the NRPS atnA by its fourth and sixth adenylation domains. The second module of atnA is the Thr module and contains an epimerase (E) domain responsible for the epimerization of Thr to D-allo-Thr. Additionally, despite atnA having only one epimerase domain, the first amino acid of aspercryptin A1 is D-Ser, suggesting that serine is either loaded directly as D-Ser on the first module or that the epimerase domain in the threonine module epimerizes both L-Ser and L-Thr. After condensation of the hexapeptide of aspercryptin, the C-terminal reductase (TE) domain might be involved in the reductive release and production of the aldehyde hexapeptide. Further reduction would generate aspercryptins. The variety of aspercryptins produced reflects the flexibility of the atnA NRPS, allowing incorporation of alanine instead of serine, valine for isoleucine, and a C10 fatty amino alcohol instead of the C12 version. AtnB seems to be involved in the selectivity for Ile versus Val by the third module. Moreover, type B, C and D aspercryptins have an additional N-terminal cichorine, acetyl and propionyl group respectively. The protein is Aspercryptin biosynthesis cluster protein B of Emericella nidulans (strain FGSC A4 / ATCC 38163 / CBS 112.46 / NRRL 194 / M139) (Aspergillus nidulans).